A 173-amino-acid chain; its full sequence is Photosystem I assembly protein Ycf3 (173 aa).

3 TPR repeats span residues 35-68 (AYLY…EDNQ), 72-105 (GETL…NPKQ), and 120-153 (GRMA…YPGG).

It belongs to the Ycf3 family.

It localises to the cellular thylakoid membrane. Its function is as follows. Essential for the assembly of the photosystem I (PSI) complex. May act as a chaperone-like factor to guide the assembly of the PSI subunits. This is Photosystem I assembly protein Ycf3 from Prochlorococcus marinus (strain NATL2A).